We begin with the raw amino-acid sequence, 250 residues long: Aquaporin SIP2-1 (250 aa).

2 consecutive transmembrane segments (helical) span residues 14-34 (PWLV…GALV) and 55-75 (VALS…TGGA). Residues 78-80 (NPL) carry the NPA 1 motif. 4 consecutive transmembrane segments (helical) span residues 95–115 (LYLF…ILGV), 132–152 (SVGV…VVIV), 178–200 (FHLL…AWAY), and 211–231 (LLVY…VVTL). Positions 191–193 (NPA) match the NPA 2 motif.

Belongs to the MIP/aquaporin (TC 1.A.8) family. SIP (TC 1.A.8.10) subfamily. As to expression, expressed in leaves and anthers, and at lower levels in roots.

It localises to the membrane. Its function is as follows. Aquaporins facilitate the transport of water and small neutral solutes across cell membranes. The protein is Aquaporin SIP2-1 (SIP2-1) of Oryza sativa subsp. japonica (Rice).